Here is a 247-residue protein sequence, read N- to C-terminus: GTP cyclohydrolase 1 type 2 homolog (247 aa).

Residues histidine 63, histidine 64, aspartate 101, histidine 215, and glutamate 219 each coordinate a divalent metal cation.

Belongs to the GTP cyclohydrolase I type 2/NIF3 family. In terms of assembly, toroid-shaped homohexamer. In the hexamer, 3 dimers assemble to form a ring-like structure surrounding a central hole.

Functionally, provides significant protection from radiation damage and may be involved in the degradation of radiation-damaged nucleotides. In Escherichia coli O157:H7, this protein is GTP cyclohydrolase 1 type 2 homolog (ybgI).